Here is a 247-residue protein sequence, read N- to C-terminus: Probable transcriptional regulatory protein Spro_2779 (247 aa).

The protein belongs to the TACO1 family.

The protein resides in the cytoplasm. This is Probable transcriptional regulatory protein Spro_2779 from Serratia proteamaculans (strain 568).